The primary structure comprises 637 residues: Chaperone protein HtpG (637 aa).

The tract at residues 1–345 (MSQQETHGFQ…SNDLPLNVSR (345 aa)) is a; substrate-binding. The interval 346–562 (EILQDNHITK…EGEMSTQMIK (217 aa)) is b. Residues 563–637 (LMQAAGQPVP…MNQMLLANMK (75 aa)) form a c region.

It belongs to the heat shock protein 90 family. As to quaternary structure, homodimer.

It is found in the cytoplasm. Functionally, molecular chaperone. Has ATPase activity. The chain is Chaperone protein HtpG from Shewanella sp. (strain W3-18-1).